Consider the following 522-residue polypeptide: Maturase K (522 aa).

It belongs to the intron maturase 2 family. MatK subfamily.

It localises to the plastid. It is found in the chloroplast. Usually encoded in the trnK tRNA gene intron. Probably assists in splicing its own and other chloroplast group II introns. The sequence is that of Maturase K from Tigridia pavonia (Mexican shell flower).